Consider the following 192-residue polypeptide: Glycerol-3-phosphate acyltransferase (192 aa).

The next 5 helical transmembrane spans lie at 1 to 21, 49 to 69, 80 to 100, 110 to 130, and 143 to 163; these read MFIAILMGAYLLGSIPFAYIL, GLAGLVLLLDIAKSAVLIYSL, ELCIVGLLSVLGHIYPIWLKF, IGVIIPLNPLMLCVFFISWLF, and IVSIIATMIVCYLTESGVVAL.

It belongs to the PlsY family. Probably interacts with PlsX.

The protein localises to the cell inner membrane. It carries out the reaction an acyl phosphate + sn-glycerol 3-phosphate = a 1-acyl-sn-glycero-3-phosphate + phosphate. It functions in the pathway lipid metabolism; phospholipid metabolism. Its function is as follows. Catalyzes the transfer of an acyl group from acyl-phosphate (acyl-PO(4)) to glycerol-3-phosphate (G3P) to form lysophosphatidic acid (LPA). This enzyme utilizes acyl-phosphate as fatty acyl donor, but not acyl-CoA or acyl-ACP. The chain is Glycerol-3-phosphate acyltransferase from Anaplasma phagocytophilum (strain HZ).